Consider the following 240-residue polypeptide: Adapter protein MecA (240 aa).

It belongs to the MecA family. As to quaternary structure, homodimer.

Its function is as follows. Enables the recognition and targeting of unfolded and aggregated proteins to the ClpC protease or to other proteins involved in proteolysis. The protein is Adapter protein MecA of Streptococcus mutans serotype c (strain ATCC 700610 / UA159).